The following is a 247-amino-acid chain: tRNA pseudouridine synthase A (247 aa).

D53 acts as the Nucleophile in catalysis. Residue Y112 coordinates substrate.

Belongs to the tRNA pseudouridine synthase TruA family. Homodimer.

The catalysed reaction is uridine(38/39/40) in tRNA = pseudouridine(38/39/40) in tRNA. Its function is as follows. Formation of pseudouridine at positions 38, 39 and 40 in the anticodon stem and loop of transfer RNAs. The protein is tRNA pseudouridine synthase A of Anaplasma marginale (strain St. Maries).